Reading from the N-terminus, the 311-residue chain is Porphobilinogen deaminase (311 aa).

Cys241 carries the post-translational modification S-(dipyrrolylmethanemethyl)cysteine.

The protein belongs to the HMBS family. Monomer. Dipyrromethane is required as a cofactor.

It carries out the reaction 4 porphobilinogen + H2O = hydroxymethylbilane + 4 NH4(+). The protein operates within porphyrin-containing compound metabolism; protoporphyrin-IX biosynthesis; coproporphyrinogen-III from 5-aminolevulinate: step 2/4. Its function is as follows. Tetrapolymerization of the monopyrrole PBG into the hydroxymethylbilane pre-uroporphyrinogen in several discrete steps. In Halalkalibacterium halodurans (strain ATCC BAA-125 / DSM 18197 / FERM 7344 / JCM 9153 / C-125) (Bacillus halodurans), this protein is Porphobilinogen deaminase (hemC).